A 458-amino-acid polypeptide reads, in one-letter code: ATP synthase subunit beta (458 aa).

ATP is bound at residue 148-155 (GGAGVGKT).

It belongs to the ATPase alpha/beta chains family. F-type ATPases have 2 components, CF(1) - the catalytic core - and CF(0) - the membrane proton channel. CF(1) has five subunits: alpha(3), beta(3), gamma(1), delta(1), epsilon(1). CF(0) has three main subunits: a(1), b(2) and c(9-12). The alpha and beta chains form an alternating ring which encloses part of the gamma chain. CF(1) is attached to CF(0) by a central stalk formed by the gamma and epsilon chains, while a peripheral stalk is formed by the delta and b chains.

The protein resides in the cell inner membrane. The enzyme catalyses ATP + H2O + 4 H(+)(in) = ADP + phosphate + 5 H(+)(out). Produces ATP from ADP in the presence of a proton gradient across the membrane. The catalytic sites are hosted primarily by the beta subunits. The protein is ATP synthase subunit beta of Francisella tularensis subsp. holarctica (strain FTNF002-00 / FTA).